A 2161-amino-acid chain; its full sequence is Voltage-dependent L-type calcium channel subunit alpha-1D (2161 aa).

Disordered stretches follow at residues 1–21 (MMMMMMMKKMQHQRQQQADHA), 30–49 (TRLPLSGEGPTSQPNSSKQT), and 64–100 (KAAQTMSTSAPPPVGSLSQRKRQQYAKSKKQGNSSNS). The Cytoplasmic portion of the chain corresponds to 1–126 (MMMMMMMKKM…RACISIVEWK (126 aa)). Polar residues predominate over residues 38 to 49 (GPTSQPNSSKQT). The segment covering 82 to 93 (QRKRQQYAKSKK) has biased composition (basic residues). Residues 113–409 (NPIRRACISI…LVLGVLSGEF (297 aa)) form an I repeat. Residues 127-145 (PFDIFILLAIFANCVALAI) form a helical membrane-spanning segment. Topologically, residues 146-163 (YIPFPEDDSNSTNHNLEK) are extracellular. Asn155 is a glycosylation site (N-linked (GlcNAc...) asparagine). The helical transmembrane segment at 164 to 183 (VEYAFLIIFTVETFLKIIAY) threads the bilayer. Over 184–195 (GLLLHPNAYVRN) the chain is Cytoplasmic. Residues 196-214 (GWNLLDFVIVIVGLFSVIL) form a helical membrane-spanning segment. The Extracellular portion of the chain corresponds to 215–235 (EQLTKETEGGNHSSGKSGGFD). N-linked (GlcNAc...) asparagine glycosylation is present at Asn225. The chain crosses the membrane as a helical span at residues 236 to 254 (VKALRAFRVLRPLRLVSGV). Topologically, residues 255 to 273 (PSLQVVLNSIIKAMVPLLH) are cytoplasmic. Residues 274–293 (IALLVLFVIIIYAIIGLELF) traverse the membrane as a helical segment. Topologically, residues 294 to 381 (IGKMHKTCFF…WMNDAMGFEL (88 aa)) are extracellular. Asn329 carries an N-linked (GlcNAc...) asparagine glycan. Glu364 is a binding site for Ca(2+). The helical transmembrane segment at 382–406 (PWVYFVSLVIFGSFFVLNLVLGVLS) threads the bilayer. Topologically, residues 407-523 (GEFSKEREKA…RRCRAAVKSV (117 aa)) are cytoplasmic. The tract at residues 429–446 (QQLEEDLKGYLDWITQAE) is binding to the beta subunit. The tract at residues 449–482 (DPENEEEGGEEGKRNTSMPTSETESVNTENVSGE) is disordered. Residues 463–479 (NTSMPTSETESVNTENV) are compositionally biased toward polar residues. The II repeat unit spans residues 509-755 (NRFNRRRCRA…VFLAIAVDNL (247 aa)). A helical transmembrane segment spans residues 524-543 (TFYWLVIVLVFLNTLTISSE). Over 544 to 558 (HYNQPDWLTQIQDIA) the chain is Extracellular. Residues 559 to 577 (NKVLLALFTCEMLVKMYSL) form a helical membrane-spanning segment. Topologically, residues 578–585 (GLQAYFVS) are cytoplasmic. The helical transmembrane segment at 586–604 (LFNRFDCFVVCGGITETIL) threads the bilayer. The Extracellular segment spans residues 605–614 (VELEIMSPLG). The helical transmembrane segment at 615 to 633 (ISVFRCVRLLRIFKVTRHW) threads the bilayer. At 634-652 (TSLSNLVASLLNSMKSIAS) the chain is on the cytoplasmic side. A helical membrane pass occupies residues 653–673 (LLLLLFLFIIIFSLLGMQLFG). The Extracellular portion of the chain corresponds to 674–727 (GKFNFDETQTKRSTFDNFPQALLTVFQILTGEDWNAVMYDGIMAYGGPSSSGMI). Residue Glu705 participates in Ca(2+) binding. Residues 728–752 (VCIYFIILFICGNYILLNVFLAIAV) form a helical membrane-spanning segment. At 753–886 (DNLADAESLN…VGCHKLINHH (134 aa)) the chain is on the cytoplasmic side. Basic and acidic residues predominate over residues 766–790 (KEEAEEKERKKIARKESLENKKNNK). Positions 766–850 (KEEAEEKERK…AGPRPRRISE (85 aa)) are disordered. Residues 791–802 (PEVNQIANSDNK) show a composition bias toward polar residues. A compositionally biased stretch (acidic residues) spans 825 to 838 (VGEEEEEEEEDEPE). An III repeat occupies 873-1155 (NPIRVGCHKL…IFVGFVIVTF (283 aa)). The chain crosses the membrane as a helical span at residues 887-905 (IFTNLILVFIMLSSAALAA). The Extracellular portion of the chain corresponds to 906–921 (EDPIRSHSFRNTILGY). A helical membrane pass occupies residues 922-941 (FDYAFTAIFTVEILLKMTTF). Residues 942–953 (GAFLHKGAFCRN) lie on the Cytoplasmic side of the membrane. The chain crosses the membrane as a helical span at residues 954 to 972 (YFNLLDMLVVGVSLVSFGI). At 973-978 (QSSAIS) the chain is on the extracellular side. A helical transmembrane segment spans residues 979–998 (VVKILRVLRVLRPLRAINRA). At 999–1017 (KGLKHVVQCVFVAIRTIGN) the chain is on the cytoplasmic side. A helical transmembrane segment spans residues 1018 to 1037 (IMIVTTLLQFMFACIGVQLF). Residues 1038 to 1127 (KGKFYRCTDE…IGPIYNHRVE (90 aa)) lie on the Extracellular side of the membrane. Positions 1075–1165 (RIWQNSDFNF…QEQGEKEYKN (91 aa)) are dihydropyridine binding. Glu1101 contributes to the Ca(2+) binding site. The chain crosses the membrane as a helical span at residues 1128-1148 (ISIFFIIYIIIVAFFMMNIFV). Residues 1149-1205 (GFVIVTFQEQGEKEYKNCELDKNQRQCVEYALKARPLRRYIPKNPYQYKFWYVVNSS) lie on the Cytoplasmic side of the membrane. Residues 1192 to 1467 (NPYQYKFWYV…LFVAVIMDNF (276 aa)) form an IV repeat. The chain crosses the membrane as a helical span at residues 1206-1224 (PFEYMMFVLIMLNTLCLAM). Topologically, residues 1225 to 1239 (QHYEQSKMFNDAMDI) are extracellular. The chain crosses the membrane as a helical span at residues 1240–1259 (LNMVFTGVFTVEMVLKVIAF). Residues 1260 to 1266 (KPKGYFS) are Cytoplasmic-facing. Residues 1267 to 1288 (DAWNTFDSLIVIGSIIDVALSE) traverse the membrane as a helical segment. Over 1289–1313 (ADPTESENVPVPTATPGNSEESNRI) the chain is Extracellular. A helical membrane pass occupies residues 1314–1333 (SITFFRLFRVMRLVKLLSRG). Over 1334-1352 (EGIRTLLWTFIKSFQALPY) the chain is Cytoplasmic. A helical transmembrane segment spans residues 1353–1372 (VALLIAMLFFIYAVIGMQMF). Residues 1373–1439 (GKVAMRDNNQ…GEEYTCGSNF (67 aa)) are Extracellular-facing. The dihydropyridine binding stretch occupies residues 1420 to 1486 (LCDPESDYNP…LGPHHLDEFK (67 aa)). A phenylalkylamine binding region spans residues 1432 to 1475 (EYTCGSNFAIVYFISFYMLCAFLIINLFVAVIMDNFDYLTRDWS). Residues 1440 to 1464 (AIVYFISFYMLCAFLIINLFVAVIM) traverse the membrane as a helical segment. Residues 1465-2161 (DNFDYLTRDW…ADEMICITTL (697 aa)) lie on the Cytoplasmic side of the membrane. Disordered stretches follow at residues 1659–1678 (SCDLQDDEPEETKREEEDDV), 1684–1804 (ALLG…VKRT), 1872–1919 (PGRN…ASHR), and 2108–2152 (NGNV…EDLA). The span at 1745-1763 (SIGKQVPTSTNANLNNANM) shows a compositional bias: polar residues. Residues 1779-1797 (HVSENGHHSSHKHDREPQR) show a composition bias toward basic and acidic residues. Positions 2138-2152 (SDEEPDPGRDEEDLA) are enriched in acidic residues.

The protein belongs to the calcium channel alpha-1 subunit (TC 1.A.1.11) family. CACNA1D subfamily. As to quaternary structure, voltage-dependent calcium channels are multisubunit complexes, consisting of alpha-1, alpha-2, beta and delta subunits in a 1:1:1:1 ratio. The channel activity is directed by the pore-forming and voltage-sensitive alpha-1 subunit. In many cases, this subunit is sufficient to generate voltage-sensitive calcium channel activity. The auxiliary subunits beta and alpha-2/delta linked by a disulfide bridge regulate the channel activity. Channel activity is further modulated, depending on the presence of specific delta subunit isoforms. Interacts (via IQ domain) with CABP1 and CABP4 in a calcium independent manner. Interacts with RIMBP2. As to expression, expressed in pancreatic islets and in brain, where it has been seen in cerebral cortex, hippocampus, basal ganglia, habenula and thalamus. Expressed in the small cell lung carcinoma cell line SCC-9. No expression in skeletal muscle.

It is found in the membrane. It catalyses the reaction Ca(2+)(in) = Ca(2+)(out). Functionally, voltage-sensitive calcium channels (VSCC) mediate the entry of calcium ions into excitable cells and are also involved in a variety of calcium-dependent processes, including muscle contraction, hormone or neurotransmitter release, gene expression, cell motility, cell division and cell death. The isoform alpha-1D gives rise to L-type calcium currents. Long-lasting (L-type) calcium channels belong to the 'high-voltage activated' (HVA) group. They are blocked by dihydropyridines (DHP), phenylalkylamines, and by benzothiazepines. Voltage-sensitive calcium channels (VSCC) mediate the entry of calcium ions into excitable cells and are also involved in a variety of calcium-dependent processes, including muscle contraction, hormone or neurotransmitter release, gene expression, cell motility, cell division and cell death. The isoform alpha-1D gives rise to L-type calcium currents. This chain is Voltage-dependent L-type calcium channel subunit alpha-1D (CACNA1D), found in Homo sapiens (Human).